A 281-amino-acid chain; its full sequence is uncharacterized protein (281 aa).

2 disordered regions span residues 192 to 212 (SNSSVNLSMDKKSDDSKIQET) and 227 to 281 (EDYV…SEEY). Basic and acidic residues predominate over residues 200 to 211 (MDKKSDDSKIQE). 2 stretches are compositionally biased toward acidic residues: residues 227–240 (EDYVDGNEDCISDN) and 249–260 (DTDSDLGDLEDP).

It belongs to the cullin family.

This is an uncharacterized protein from Acanthamoeba polyphaga (Amoeba).